The chain runs to 910 residues: Eukaryotic translation initiation factor 3 subunit C (910 aa).

Residues 1-21 are disordered; sequence MSRFFANGSDSESESSEDEIQ. A compositionally biased stretch (acidic residues) spans 11-20; the sequence is SESESSEDEI. 4 positions are modified to phosphoserine: S34, S165, S176, and S185. The tract at residues 157–279 is disordered; that stretch reads FREAPDQESE…IRKRAEDDED (123 aa). Residues 162–186 show a composition bias toward acidic residues; that stretch reads DQESEAEDEVVALESDGGDAGDDSD. The span at 188 to 207 shows a compositional bias: low complexity; it reads GVKPTEAAPKAVKTAPAKAA. The span at 209–235 shows a compositional bias: acidic residues; it reads ADDDDSDDSIDWDSDSESETESSDDEN. The segment covering 240 to 268 has biased composition (basic and acidic residues); the sequence is MRERFLKRTTEKEEKDDDKRKDKRKEQKI. A PCI domain is found at 639 to 815; that stretch reads FHMHINLELL…ETVVMHRSEP (177 aa). The interval 847–910 is disordered; sequence FFQRGNMGNR…QQQVQTIDEE (64 aa). Residues 862–874 are compositionally biased toward low complexity; the sequence is NRNQNNQGGNWLG. A compositionally biased stretch (basic residues) spans 882–891; it reads RNRNQRGHHK. A compositionally biased stretch (low complexity) spans 895 to 910; that stretch reads DRQQQQQQQVQTIDEE.

This sequence belongs to the eIF-3 subunit C family. In terms of assembly, component of the eukaryotic translation initiation factor 3 (eIF-3) complex. The eIF-3 complex interacts with pix.

It is found in the cytoplasm. Component of the eukaryotic translation initiation factor 3 (eIF-3) complex, which is involved in protein synthesis of a specialized repertoire of mRNAs and, together with other initiation factors, stimulates binding of mRNA and methionyl-tRNAi to the 40S ribosome. The eIF-3 complex specifically targets and initiates translation of a subset of mRNAs involved in cell proliferation. The polypeptide is Eukaryotic translation initiation factor 3 subunit C (Drosophila erecta (Fruit fly)).